Consider the following 138-residue polypeptide: Small ribosomal subunit protein uS11c (138 aa).

Residues 1–23 (MAKPILRIGSRKNTRSGSRKNVR) are disordered. Over residues 9-23 (GSRKNTRSGSRKNVR) the composition is skewed to basic residues.

Belongs to the universal ribosomal protein uS11 family. In terms of assembly, part of the 30S ribosomal subunit.

It is found in the plastid. It localises to the chloroplast. This is Small ribosomal subunit protein uS11c from Aethionema grandiflorum (Persian stone-cress).